The sequence spans 579 residues: Viral transcription factor IE2 (579 aa).

The span at 1-11 (MESSAKRKMDP) shows a compositional bias: basic and acidic residues. 2 disordered regions span residues 1-30 (MESS…TPVT) and 99-161 (DSSS…VIIK). Over residues 99–133 (DSSSTGPTLTTHSCSVSSAPLNKPTPTSVAVTNTP) the composition is skewed to polar residues. Glycyl lysine isopeptide (Lys-Gly) (interchain with G-Cter in SUMO) cross-links involve residues Lys-175 and Lys-180. Positions 199–202 (CIVI) match the SUMO-interacting motif 1/SIM1 motif. The tract at residues 200 to 208 (IVISDSEEE) is non-covalent SUMO1 binding region (SIM). A phosphoserine mark is found at Ser-203 and Ser-205. A disordered region spans residues 206-335 (EEEQGEEVET…SKRISELDNE (130 aa)). Composition is skewed to low complexity over residues 216 to 236 (RGAT…TSPT), 259 to 270 (SSSSSSCSSASD), and 301 to 316 (AASS…SSGG). The SUMO-interacting motif 1/SIM2 motif lies at 409–412 (IQII). The SUMO-interacting motif 1/SIM3 motif lies at 500–503 (VDLL).

The protein belongs to the HHV-5 IE2 protein family. In terms of assembly, interacts with host SUMO-modified form of TATA-binding protein (TBP)-associated factor 12/TAF12 in a SIM-dependent manner; this interaction increases the transactivation activity of IE2. Interacts with host CHAF1A. Interacts with several components of the host transcriptional machinery including TBP, TF2B and CREB1. Interacts with host DNA replication licensing factor MCM3. Interacts with host PLSCR1; this interaction inhibits IE2 transactivating activity. Phosphorylated by host CK2 at Ser-203 and Ser-205; leading to enhanced SUMOylation. Post-translationally, SUMOylated; SUMOylation is enhanced when IE2 is phosphorylated by host CK2. The sumoylation is necessary for efficient replication of the virus and thus for the function of this viral transcription factor.

It is found in the host nucleus. In terms of biological role, stimulates viral early and late gene expression and thus play a crucial role in the regulation of productive infection. Selectively drives host RNA Pol II transcription initiation at a subset of viral early-late and late promoters without substantially affecting Pol II transcription of expressed host genes. Mechanistically, forms a repressive complex at the major immediate-early promoter region involving direct association with host nucleosomes and TBP. Concerning activation, stimulates transcription by binding nearby, but not within, core promoter regions. In addition, activates quiescent cells to reenter the cell cycle and up-regulates several E2F-responsive genes, which are responsible for pushing the cell into S phase. In S-phase, inhibits cellular DNA synthesis and blocks further cell cycle progression. This is Viral transcription factor IE2 (UL122) from Homo sapiens (Human).